A 324-amino-acid chain; its full sequence is Beta-ketoacyl-[acyl-carrier-protein] synthase III (324 aa).

Residues cysteine 114 and histidine 251 contribute to the active site. Positions 252–256 (QANLR) are ACP-binding. Asparagine 281 is a catalytic residue.

The protein belongs to the thiolase-like superfamily. FabH family. As to quaternary structure, homodimer.

It localises to the cytoplasm. The catalysed reaction is malonyl-[ACP] + acetyl-CoA + H(+) = 3-oxobutanoyl-[ACP] + CO2 + CoA. It functions in the pathway lipid metabolism; fatty acid biosynthesis. Its function is as follows. Catalyzes the condensation reaction of fatty acid synthesis by the addition to an acyl acceptor of two carbons from malonyl-ACP. Catalyzes the first condensation reaction which initiates fatty acid synthesis and may therefore play a role in governing the total rate of fatty acid production. Possesses both acetoacetyl-ACP synthase and acetyl transacylase activities. Its substrate specificity determines the biosynthesis of branched-chain and/or straight-chain of fatty acids. The sequence is that of Beta-ketoacyl-[acyl-carrier-protein] synthase III from Dinoroseobacter shibae (strain DSM 16493 / NCIMB 14021 / DFL 12).